The sequence spans 468 residues: Uronate isomerase (468 aa).

This sequence belongs to the metallo-dependent hydrolases superfamily. Uronate isomerase family.

The enzyme catalyses D-glucuronate = D-fructuronate. It carries out the reaction aldehydo-D-galacturonate = keto-D-tagaturonate. It functions in the pathway carbohydrate metabolism; pentose and glucuronate interconversion. In Phocaeicola vulgatus (strain ATCC 8482 / DSM 1447 / JCM 5826 / CCUG 4940 / NBRC 14291 / NCTC 11154) (Bacteroides vulgatus), this protein is Uronate isomerase.